A 103-amino-acid polypeptide reads, in one-letter code: Small ribosomal subunit protein uS10 (103 aa).

Belongs to the universal ribosomal protein uS10 family. As to quaternary structure, part of the 30S ribosomal subunit.

Functionally, involved in the binding of tRNA to the ribosomes. This is Small ribosomal subunit protein uS10 from Blochmanniella pennsylvanica (strain BPEN).